Consider the following 394-residue polypeptide: Probable peptidoglycan glycosyltransferase FtsW (394 aa).

The Cytoplasmic portion of the chain corresponds to 1–26; the sequence is MNTMRPRHLNQRGKPVSRPISLYDKW. The chain crosses the membrane as a helical span at residues 27 to 47; that stretch reads LIGAVFGLLIIGLMMVASSSV. Residues 48-57 are Periplasmic-facing; it reads MISTKYFHQP. The chain crosses the membrane as a helical span at residues 58 to 78; sequence FHFLIRQACYLFVGLLLALIV. The Cytoplasmic portion of the chain corresponds to 79 to 88; it reads VRTDSSFWEK. The chain crosses the membrane as a helical span at residues 89–109; sequence ISMPMMIGCVFLLLIVLIPGI. At 110–118 the chain is on the periplasmic side; it reads GKSVNGSRR. A helical membrane pass occupies residues 119–139; sequence WLALGPIGVQVSELTKLAMIF. The Cytoplasmic portion of the chain corresponds to 140–154; that stretch reads YLSGYLVRQQEAVCE. Residues 155–175 form a helical membrane-spanning segment; it reads SIFGFIKPMAILAVVSVLLLL. At 176 to 177 the chain is on the periplasmic side; that stretch reads EP. A helical transmembrane segment spans residues 178-198; that stretch reads DFGATVVISGTVMAMLFLAGV. The Cytoplasmic segment spans residues 199-201; it reads KLR. Residues 202 to 222 traverse the membrane as a helical segment; sequence YYFGLMLVVVTALALLAVSSP. Topologically, residues 223–278 are periplasmic; sequence YRVARLTAFLDPWADQYNSGYQLTQSLIAFGRGGWFGTGLGESIQKLLYLPEAHTD. Residues 279–299 form a helical membrane-spanning segment; that stretch reads FLFAVIAEELGLFGILVVITL. Topologically, residues 300 to 327 are cytoplasmic; the sequence is YSILVIRGLNIGYTAYTQERHFASYTAY. The helical transmembrane segment at 328–348 threads the bilayer; that stretch reads GLTIWLALQASINMGVNAGLL. Residues 349–354 are Periplasmic-facing; the sequence is PTKGLT. The chain crosses the membrane as a helical span at residues 355–375; the sequence is LPLLSYGGASMVINCIVIALL. At 376 to 394 the chain is on the cytoplasmic side; it reads LRIDHENRWQSLGLRPLTA.

Belongs to the SEDS family. FtsW subfamily.

The protein resides in the cell inner membrane. The catalysed reaction is [GlcNAc-(1-&gt;4)-Mur2Ac(oyl-L-Ala-gamma-D-Glu-L-Lys-D-Ala-D-Ala)](n)-di-trans,octa-cis-undecaprenyl diphosphate + beta-D-GlcNAc-(1-&gt;4)-Mur2Ac(oyl-L-Ala-gamma-D-Glu-L-Lys-D-Ala-D-Ala)-di-trans,octa-cis-undecaprenyl diphosphate = [GlcNAc-(1-&gt;4)-Mur2Ac(oyl-L-Ala-gamma-D-Glu-L-Lys-D-Ala-D-Ala)](n+1)-di-trans,octa-cis-undecaprenyl diphosphate + di-trans,octa-cis-undecaprenyl diphosphate + H(+). Its pathway is cell wall biogenesis; peptidoglycan biosynthesis. Functionally, peptidoglycan polymerase that is essential for cell division. The chain is Probable peptidoglycan glycosyltransferase FtsW from Legionella pneumophila subsp. pneumophila (strain Philadelphia 1 / ATCC 33152 / DSM 7513).